We begin with the raw amino-acid sequence, 277 residues long: MSNVEQPFMQGIDDGWNLKNYLNIQSTSLCLDKLCNIYTQGQDENEDAKELQAIKIKIEWCKDTSVLLSSICVMLLDSIHDFLVQQGKITKESISKRDYSHEITIFNFKYAQQEMQNEKLYHFAKLLEPALESLKVTNNHITHATIVGQVSGSEHNLSTAIEQVDVIVNYFYDSSEKFLELGNKVQTLGKAKNKKHWLGVYQSFGKASVDQIQKQLECYNVRMMELNKTDENNESAICESQASSKEDERSDKTTSSSKKKSFTKLISNSRLNLWNKQ.

The disordered stretch occupies residues 232-262 (NNESAICESQASSKEDERSDKTTSSSKKKSF). Residues 234-243 (ESAICESQAS) show a composition bias toward polar residues.

It is found in the cytoplasm. The protein localises to the nucleus. This is an uncharacterized protein from Schizosaccharomyces pombe (strain 972 / ATCC 24843) (Fission yeast).